Here is a 652-residue protein sequence, read N- to C-terminus: DNA ligase (652 aa).

Residues 29–33 (DSEYD), 78–79 (SL), and glutamate 107 each bind NAD(+). Residue lysine 109 is the N6-AMP-lysine intermediate of the active site. Positions 130, 164, 278, and 302 each coordinate NAD(+). 4 residues coordinate Zn(2+): cysteine 395, cysteine 398, cysteine 413, and cysteine 418. The 76-residue stretch at 577 to 652 (VADAALSGLT…VRDEAWLESL (76 aa)) folds into the BRCT domain.

The protein belongs to the NAD-dependent DNA ligase family. LigA subfamily. Requires Mg(2+) as cofactor. It depends on Mn(2+) as a cofactor.

It catalyses the reaction NAD(+) + (deoxyribonucleotide)n-3'-hydroxyl + 5'-phospho-(deoxyribonucleotide)m = (deoxyribonucleotide)n+m + AMP + beta-nicotinamide D-nucleotide.. Its function is as follows. DNA ligase that catalyzes the formation of phosphodiester linkages between 5'-phosphoryl and 3'-hydroxyl groups in double-stranded DNA using NAD as a coenzyme and as the energy source for the reaction. It is essential for DNA replication and repair of damaged DNA. This Streptococcus pneumoniae (strain CGSP14) protein is DNA ligase.